The following is a 239-amino-acid chain: Protein GrpE (239 aa).

2 disordered regions span residues 1–50 (MIEN…INTE) and 209–239 (MGHG…SEDV). Residues 16 to 30 (VLNQDNAPEDNSSAA) are compositionally biased toward polar residues. Residues 218–239 (EEVEKDTVEEDIDSEENTSEDV) show a composition bias toward acidic residues.

Belongs to the GrpE family. In terms of assembly, homodimer.

The protein localises to the cytoplasm. Participates actively in the response to hyperosmotic and heat shock by preventing the aggregation of stress-denatured proteins, in association with DnaK and GrpE. It is the nucleotide exchange factor for DnaK and may function as a thermosensor. Unfolded proteins bind initially to DnaJ; upon interaction with the DnaJ-bound protein, DnaK hydrolyzes its bound ATP, resulting in the formation of a stable complex. GrpE releases ADP from DnaK; ATP binding to DnaK triggers the release of the substrate protein, thus completing the reaction cycle. Several rounds of ATP-dependent interactions between DnaJ, DnaK and GrpE are required for fully efficient folding. This Prochlorococcus marinus (strain MIT 9312) protein is Protein GrpE.